We begin with the raw amino-acid sequence, 475 residues long: Ribulose bisphosphate carboxylase large chain (475 aa).

K14 carries the post-translational modification N6,N6,N6-trimethyllysine. The substrate site is built by N123 and T173. K175 serves as the catalytic Proton acceptor. Substrate is bound at residue K177. K201, D203, and E204 together coordinate Mg(2+). An N6-carboxylysine modification is found at K201. The active-site Proton acceptor is H294. Residues R295, H327, and S379 each contribute to the substrate site.

The protein belongs to the RuBisCO large chain family. Type I subfamily. As to quaternary structure, heterohexadecamer of 8 large chains and 8 small chains; disulfide-linked. The disulfide link is formed within the large subunit homodimers. The cofactor is Mg(2+). Post-translationally, the disulfide bond which can form in the large chain dimeric partners within the hexadecamer appears to be associated with oxidative stress and protein turnover.

It localises to the plastid. It catalyses the reaction 2 (2R)-3-phosphoglycerate + 2 H(+) = D-ribulose 1,5-bisphosphate + CO2 + H2O. The catalysed reaction is D-ribulose 1,5-bisphosphate + O2 = 2-phosphoglycolate + (2R)-3-phosphoglycerate + 2 H(+). Its function is as follows. RuBisCO catalyzes two reactions: the carboxylation of D-ribulose 1,5-bisphosphate, the primary event in carbon dioxide fixation, as well as the oxidative fragmentation of the pentose substrate in the photorespiration process. Both reactions occur simultaneously and in competition at the same active site. This Euglena longa (Euglenophycean alga) protein is Ribulose bisphosphate carboxylase large chain (rbcL).